We begin with the raw amino-acid sequence, 236 residues long: Ribitol-5-phosphate cytidylyltransferase (236 aa).

CTP-binding positions include 7–10 (LAGG) and 80–86 (GTDRNET).

The protein belongs to the IspD/TarI cytidylyltransferase family. TarI subfamily.

The enzyme catalyses D-ribitol 5-phosphate + CTP + H(+) = CDP-L-ribitol + diphosphate. It participates in cell wall biogenesis; poly(ribitol phosphate) teichoic acid biosynthesis. Catalyzes the transfer of the cytidylyl group of CTP to D-ribitol 5-phosphate. This Listeria monocytogenes serovar 1/2a (strain ATCC BAA-679 / EGD-e) protein is Ribitol-5-phosphate cytidylyltransferase.